A 193-amino-acid chain; its full sequence is Hydroxyacylglutathione hydrolase-like protein (193 aa).

His54, His56, Asp58, His59, and His110 together coordinate Zn(2+).

It belongs to the metallo-beta-lactamase superfamily. Glyoxalase II family. The cofactor is Zn(2+).

Its function is as follows. Hydrolase acting on ester bonds. The chain is Hydroxyacylglutathione hydrolase-like protein (HAGHL) from Bos taurus (Bovine).